We begin with the raw amino-acid sequence, 147 residues long: Peptide deformylase 1 (147 aa).

Positions 90 and 132 each coordinate Fe cation. The active site involves E133. H136 serves as a coordination point for Fe cation.

The protein belongs to the polypeptide deformylase family. Fe(2+) is required as a cofactor.

The enzyme catalyses N-terminal N-formyl-L-methionyl-[peptide] + H2O = N-terminal L-methionyl-[peptide] + formate. Removes the formyl group from the N-terminal Met of newly synthesized proteins. Requires at least a dipeptide for an efficient rate of reaction. N-terminal L-methionine is a prerequisite for activity but the enzyme has broad specificity at other positions. In Clostridium perfringens (strain 13 / Type A), this protein is Peptide deformylase 1.